A 725-amino-acid polypeptide reads, in one-letter code: Glutamine-dependent NAD(+) synthetase (725 aa).

In terms of domain architecture, CN hydrolase spans 5–275 (VTVATCALNQ…VEVLTATLDL (271 aa)). The Proton acceptor; for glutaminase activity role is filled by Glu45. The active-site For glutaminase activity is the Lys114. Cys175 acts as the Nucleophile; for glutaminase activity in catalysis. Positions 325–706 (YHRPEEEISL…KASQTREEQV (382 aa)) are ligase. 355-362 (PLSGGVDS) provides a ligand contact to ATP. Ser357 is an active-site residue.

It in the C-terminal section; belongs to the NAD synthetase family. Homohexamer. As to expression, highly expressed in small intestine, kidney, liver and testis. Weakly expressed in skeletal muscle, spleen, lung, heart and brain.

The catalysed reaction is deamido-NAD(+) + L-glutamine + ATP + H2O = L-glutamate + AMP + diphosphate + NAD(+) + H(+). It participates in cofactor biosynthesis; NAD(+) biosynthesis; NAD(+) from deamido-NAD(+) (L-Gln route): step 1/1. In terms of biological role, catalyzes the final step of the nicotinamide adenine dinucleotide (NAD) de novo synthesis pathway, the ATP-dependent amidation of deamido-NAD using L-glutamine as a nitrogen source. In Mus musculus (Mouse), this protein is Glutamine-dependent NAD(+) synthetase (Nadsyn1).